A 598-amino-acid polypeptide reads, in one-letter code: Major royal jelly protein 5 (598 aa).

The signal sequence occupies residues 1–17 (MTTWLLLVVCLGIACQG). N-linked (GlcNAc...) asparagine glycosylation is found at Asn-148, Asn-164, Asn-181, and Asn-324.

The protein belongs to the major royal jelly protein family. Found in and secreted from the hypopharyngeal glands of the worker honey bee (at protein level); expression peaks at 8 days post eclosion. Expressed in the brains of adult worker bees peaking at 12 days post eclosion (at protein level). Expressed in the spermatheca of adult queen bees (at protein level); Expression levels are higher in mated queens than in virgin queens. Expressed in the heads of worker bees after eclosion, expression dropping with age and detectable up to 26 days of age.

It localises to the secreted. Component of royal jelly, a substance produced in the hypopharyngeal gland containing proteins, free amino acids, fatty acids, sugars and other nutrients, which is fed to developing larvae by worker nurse bees. Major royal jelly proteins (MRJPs) are high in essential amino acids and probably have a nutritional function in larval food. All larvae are fed some royal jelly (also known as worker jelly) early in their development but it forms the principal source of nutrition for larvae destined to become queen bees. Produced in the spermatheca of adult queen bees, along with other major royal jelly proteins, where it may act as a nutrient supply for sperm stored by mated queens, or be involved in energy metabolism. In Apis mellifera (Honeybee), this protein is Major royal jelly protein 5.